A 284-amino-acid chain; its full sequence is BTB/POZ domain-containing protein 2 (284 aa).

Positions 37-108 constitute a BTB domain; sequence SDTTLIIKGE…LYCDSPRIPA (72 aa).

Interacts with cul3.

It is found in the cytoplasm. Its subcellular location is the nucleus. Its pathway is protein modification; protein ubiquitination. In terms of biological role, probable substrate-specific adapter of an E3 ubiquitin-protein ligase complex which mediates the ubiquitination and subsequent proteasomal degradation of target proteins. This is BTB/POZ domain-containing protein 2 (btb2) from Schizosaccharomyces pombe (strain 972 / ATCC 24843) (Fission yeast).